Consider the following 190-residue polypeptide: Holliday junction branch migration complex subunit RuvA (190 aa).

The segment at 1 to 64 is domain I; the sequence is MIGKLSGTLD…EDAQILYGFA (64 aa). Positions 65 to 137 are domain II; it reads TSQERAAFRE…LKGKLGPDIG (73 aa). The flexible linker stretch occupies residues 137–141; it reads GVAAS. The segment at 142–190 is domain III; the sequence is VANDSQADILQALLALGYSDKEAAAALKALPSDVGVSEGIRLALRALGK.

It belongs to the RuvA family. Homotetramer. Forms an RuvA(8)-RuvB(12)-Holliday junction (HJ) complex. HJ DNA is sandwiched between 2 RuvA tetramers; dsDNA enters through RuvA and exits via RuvB. An RuvB hexamer assembles on each DNA strand where it exits the tetramer. Each RuvB hexamer is contacted by two RuvA subunits (via domain III) on 2 adjacent RuvB subunits; this complex drives branch migration. In the full resolvosome a probable DNA-RuvA(4)-RuvB(12)-RuvC(2) complex forms which resolves the HJ.

Its subcellular location is the cytoplasm. The RuvA-RuvB-RuvC complex processes Holliday junction (HJ) DNA during genetic recombination and DNA repair, while the RuvA-RuvB complex plays an important role in the rescue of blocked DNA replication forks via replication fork reversal (RFR). RuvA specifically binds to HJ cruciform DNA, conferring on it an open structure. The RuvB hexamer acts as an ATP-dependent pump, pulling dsDNA into and through the RuvAB complex. HJ branch migration allows RuvC to scan DNA until it finds its consensus sequence, where it cleaves and resolves the cruciform DNA. The polypeptide is Holliday junction branch migration complex subunit RuvA (Albidiferax ferrireducens (strain ATCC BAA-621 / DSM 15236 / T118) (Rhodoferax ferrireducens)).